We begin with the raw amino-acid sequence, 483 residues long: Protein PLASTID TRANSCRIPTIONALLY ACTIVE 14 (483 aa).

Residues 1 to 62 (MASSVSLQFL…TQPFPLFQSP (62 aa)) constitute a chloroplast transit peptide. Residues 80-325 (YKIGYVRSVR…KGEEMTINYM (246 aa)) form the SET domain. Y324 lines the S-adenosyl-L-methionine pocket.

The protein belongs to the class V-like SAM-binding methyltransferase superfamily. Component of the transcriptionally active chromosome (TAC) complexes. Interacts with PTAC12/HMR/PAP5 and PTAC7. Binds to SL1/MTERF3. As to expression, mostly expressed in leaves, flowers and seedlings, and, to a lower extent, in stems and roots.

The protein resides in the plastid. Its subcellular location is the chloroplast thylakoid. In terms of biological role, essential for chloroplast development, especially for thylakoid formation. Involved in plastid gene expression, probably by maintaining plastid-encoded RNA polymerase (PEP) activity. This chain is Protein PLASTID TRANSCRIPTIONALLY ACTIVE 14, found in Arabidopsis thaliana (Mouse-ear cress).